Consider the following 270-residue polypeptide: Putative pyruvate, phosphate dikinase regulatory protein (270 aa).

149–156 (GVSRTSKT) is an ADP binding site.

The protein belongs to the pyruvate, phosphate/water dikinase regulatory protein family. PDRP subfamily.

The catalysed reaction is N(tele)-phospho-L-histidyl/L-threonyl-[pyruvate, phosphate dikinase] + ADP = N(tele)-phospho-L-histidyl/O-phospho-L-threonyl-[pyruvate, phosphate dikinase] + AMP + H(+). The enzyme catalyses N(tele)-phospho-L-histidyl/O-phospho-L-threonyl-[pyruvate, phosphate dikinase] + phosphate + H(+) = N(tele)-phospho-L-histidyl/L-threonyl-[pyruvate, phosphate dikinase] + diphosphate. Functionally, bifunctional serine/threonine kinase and phosphorylase involved in the regulation of the pyruvate, phosphate dikinase (PPDK) by catalyzing its phosphorylation/dephosphorylation. This Sphingopyxis alaskensis (strain DSM 13593 / LMG 18877 / RB2256) (Sphingomonas alaskensis) protein is Putative pyruvate, phosphate dikinase regulatory protein.